The following is a 73-amino-acid chain: uncharacterized protein (73 aa).

This is an uncharacterized protein from Treponema pallidum (strain Nichols).